The sequence spans 301 residues: Probable protein phosphatase 2C 4 (301 aa).

Positions 1–18 are enriched in polar residues; that stretch reads MGPYLSQPNKNKTTTSGE. Positions 1–20 are disordered; the sequence is MGPYLSQPNKNKTTTSGEGK. The PPM-type phosphatase domain maps to 23-298; that stretch reads IFAASEMQGW…DNMTTLIIYL (276 aa). Residues Asp57, Gly58, Asp237, and Asp289 each coordinate Mn(2+).

Belongs to the PP2C family. The cofactor is Mg(2+). Mn(2+) serves as cofactor.

The protein localises to the membrane. It carries out the reaction O-phospho-L-seryl-[protein] + H2O = L-seryl-[protein] + phosphate. It catalyses the reaction O-phospho-L-threonyl-[protein] + H2O = L-threonyl-[protein] + phosphate. In terms of biological role, enzyme with a broad specificity. This is Probable protein phosphatase 2C 4 from Paramecium tetraurelia.